The following is a 1393-amino-acid chain: DNA-directed RNA polymerase subunit beta (1393 aa).

The protein belongs to the RNA polymerase beta chain family. The RNAP catalytic core consists of 2 alpha, 1 beta, 1 beta' and 1 omega subunit. When a sigma factor is associated with the core the holoenzyme is formed, which can initiate transcription.

The catalysed reaction is RNA(n) + a ribonucleoside 5'-triphosphate = RNA(n+1) + diphosphate. Functionally, DNA-dependent RNA polymerase catalyzes the transcription of DNA into RNA using the four ribonucleoside triphosphates as substrates. This Rhodospirillum rubrum (strain ATCC 11170 / ATH 1.1.1 / DSM 467 / LMG 4362 / NCIMB 8255 / S1) protein is DNA-directed RNA polymerase subunit beta.